A 127-amino-acid chain; its full sequence is Major sperm protein 152 (127 aa).

At Thr2 the chain carries N-acetylthreonine. The 118-residue stretch at 9–126 (DIQTQPGTKI…RRKNLPIEYN (118 aa)) folds into the MSP domain.

In terms of tissue distribution, sperm.

It is found in the cell projection. Its subcellular location is the pseudopodium. The protein localises to the cytoplasm. It localises to the cytoskeleton. Functionally, central component in molecular interactions underlying sperm crawling. Forms an extensive filament system that extends from sperm villipoda, along the leading edge of the pseudopod. The chain is Major sperm protein 152 (msp-152) from Caenorhabditis elegans.